A 598-amino-acid chain; its full sequence is IQ calmodulin-binding motif-containing protein 1 (598 aa).

The tract at residues 1–157 is interaction with BBS1, BBS8 and BBS9; that stretch reads MKPTGTDPRI…SLFWLLGGHV (157 aa). The segment at 287 to 598 is interaction with CEP290, BBS1, BBS2, BBS4, BBS5, BBS7, BBS8 and BBS9; that stretch reads QEVEEQKLHQ…NLFIGGTKPP (312 aa). IQ domains lie at 294-317, 318-338, 387-416, and 417-437; these read LHQAACLIQAYWKGFQTRKRLKKL, PSAVIALQRSFRSKRSKMLLE, EEKSALIIQKHWRGYRERKNFHQQRQSLIE, and YKAAVTLQRAALKFLAKCRKK. A coiled-coil region spans residues 336–373; the sequence is LLEINRQKEEEDLKLQLQLQRQRAMRLSRELQLSMLEI. Positions 530–598 are interaction with BBS1, BBS2, BBS4, BBS7, BBS8 and BBS9; that stretch reads AEGKEPELFL…NLFIGGTKPP (69 aa). Serine 572 carries the phosphoserine modification.

Interacts with CEP290/NPHP6; IQCB1/NPHP5 and CEP290 are proposed to form a functional NPHP5-6 module/NPHP6; localized to the centrosome. Interacts with calmodulin, ATXN10. Interacts with NPHP1, INVS, NPHP4 and RPGRIP1L; these interactions likely require additional interactors. Associates with the BBSome complex; interacts with BBS1, BBS2, BBS4, BBS5, BBS7, BBS8 and BBS9. Ubiquitously expressed in fetal and adult tissues. Localized to the outer segments and connecting cilia of photoreceptor cells. Up-regulated in a number of primary colorectal and gastric tumors.

The protein localises to the cytoplasm. Its subcellular location is the cytoskeleton. It is found in the microtubule organizing center. It localises to the centrosome. The protein resides in the centriole. Functionally, involved in ciliogenesis. The function in an early step in cilia formation depends on its association with CEP290/NPHP6. Involved in regulation of the BBSome complex integrity, specifically for presence of BBS2 and BBS5 in the complex, and in ciliary targeting of selected BBSome cargos. May play a role in controlling entry of the BBSome complex to cilia possibly implicating CEP290/NPHP6. The protein is IQ calmodulin-binding motif-containing protein 1 (IQCB1) of Homo sapiens (Human).